Reading from the N-terminus, the 557-residue chain is Leucine-rich glioma-inactivated protein 1 (557 aa).

The first 34 residues, 1–34 (MESESIRRMGNACIPLKRIAYFLCLFSVVLLTEG), serve as a signal peptide directing secretion. Residues 35–72 (KKPAKPKCPAVCTCSKDNALCENARSIPRTVPPDVISL) enclose the LRRNT domain. LRR repeat units follow at residues 92–113 (SLQLLLFTSNSFDVISDDAFIG), 116–137 (HLEYLFIENNNIKSISRHTFRG), and 140–161 (SLIHLSLANNNLQTLPKDIFKG). An LRRCT domain is found at 173 to 223 (NSFNCDCKLKWLVEWLGHTNATVEDIYCEGPPEYKKRKINSLSPKDFDCII). N192 carries N-linked (GlcNAc...) asparagine glycosylation. 7 EAR repeats span residues 225–267 (EFAK…EWDH), 271–313 (TFRN…KRDG), 317–364 (KFIK…KWNG), 366–415 (GFYS…QWSK), 419–462 (LFIN…KWGG), 464–506 (SFQD…NWDA), and 510–552 (KFVK…KHVI). An N-linked (GlcNAc...) asparagine glycan is attached at N277. Residue N422 is glycosylated (N-linked (GlcNAc...) asparagine).

Oligomer. Interacts with KCNA1 within a complex containing KCNA1, KCNA4 and KCNAB1. Can bind to ADAM11 and ADAM23. Part of a complex containing ADAM22, DLG4/PSD95 and CACNG2 (stargazin). Glycosylated. As to expression, expressed in brain. High levels found in hippocampus, thalamic nuclei, neocortex, and molecular and granule cell layers of the cerebellum.

It localises to the secreted. It is found in the synapse. The protein resides in the cytoplasm. In terms of biological role, plays a role in suppressing the production of MMP1/3 through the phosphatidylinositol 3-kinase/ERK pathway. Regulates voltage-gated potassium channels assembled from KCNA1, KCNA4 and KCNAB1. It slows down channel inactivation by precluding channel closure mediated by the KCNAB1 subunit. Ligand for ADAM22 that positively regulates synaptic transmission mediated by AMPA-type glutamate receptors. This is Leucine-rich glioma-inactivated protein 1 (Lgi1) from Rattus norvegicus (Rat).